The chain runs to 275 residues: LexA repressor (275 aa).

The tract at residues 1–50 is disordered; that stretch reads MKRSTPRPARSQAALTTSSEESPDRVERGGDGVATVTDFPDGPPDETGLT. A DNA-binding region (H-T-H motif) is located at residues 73 to 93; sequence MREIGEAVGLTSTSSVAHQLM. The interval 114–151 is disordered; sequence RSAESAVPDASAGHSPAADRAPSARRPPRGPSPIDSNP. Active-site for autocatalytic cleavage activity residues include Ser199 and Lys236.

It belongs to the peptidase S24 family. In terms of assembly, homodimer.

It carries out the reaction Hydrolysis of Ala-|-Gly bond in repressor LexA.. Functionally, represses a number of genes involved in the response to DNA damage (SOS response), including recA and lexA. In the presence of single-stranded DNA, RecA interacts with LexA causing an autocatalytic cleavage which disrupts the DNA-binding part of LexA, leading to derepression of the SOS regulon and eventually DNA repair. The chain is LexA repressor from Acidothermus cellulolyticus (strain ATCC 43068 / DSM 8971 / 11B).